The chain runs to 373 residues: Glutamate 5-kinase (373 aa).

K15 contributes to the ATP binding site. Substrate-binding residues include S55, D142, and N154. Residue 174-175 (TD) coordinates ATP. One can recognise a PUA domain in the interval 281-359 (RGSVVLDDGA…SQIEAVLGYV (79 aa)).

The protein belongs to the glutamate 5-kinase family.

It localises to the cytoplasm. It carries out the reaction L-glutamate + ATP = L-glutamyl 5-phosphate + ADP. It functions in the pathway amino-acid biosynthesis; L-proline biosynthesis; L-glutamate 5-semialdehyde from L-glutamate: step 1/2. Catalyzes the transfer of a phosphate group to glutamate to form L-glutamate 5-phosphate. The polypeptide is Glutamate 5-kinase (Nitrosomonas eutropha (strain DSM 101675 / C91 / Nm57)).